A 97-amino-acid chain; its full sequence is MPAANSMAMKRETLNLRIKPAERDLIDRAAKARGKNRTDFVLEAARAAAEEALIEQRIIMADPEAYQEFLVRLDQTPSPNAALRKTMQTPAPWEQEK.

It belongs to the TacA antitoxin family. In terms of assembly, homodimer. Forms a complex with cognate toxin TacT2.

Antitoxin component of a type II toxin-antitoxin (TA) system. Counteracts the toxic effect of cognate toxin TacT2. Functionally, the TacA2-TacT2 complex both represses and derepresses expression of its own operon. The polypeptide is Antitoxin TacA2 (Salmonella enteritidis).